A 258-amino-acid chain; its full sequence is Regulatory protein RecX (258 aa).

Belongs to the RecX family.

It is found in the cytoplasm. Modulates RecA activity. This chain is Regulatory protein RecX, found in Streptococcus pyogenes serotype M2 (strain MGAS10270).